Consider the following 161-residue polypeptide: Pathogenesis-related protein 1 (161 aa).

The first 26 residues, 1–26, serve as a signal peptide directing secretion; that stretch reads MKVTSYSRILIILAALVGALVVPLKA. One can recognise an SCP domain in the interval 34–149; sequence VNAHNQARSQ…NGGTIISCNY (116 aa). 3 cysteine pairs are disulfide-bonded: cysteine 70–cysteine 138, cysteine 113–cysteine 117, and cysteine 133–cysteine 147.

The protein belongs to the CRISP family. Expressed in flowers, stems and roots but not in leaves.

Probably involved in the defense reaction of plants against pathogens. In Arabidopsis thaliana (Mouse-ear cress), this protein is Pathogenesis-related protein 1.